A 270-amino-acid chain; its full sequence is 3-methyl-2-oxobutanoate hydroxymethyltransferase (270 aa).

Positions 43 and 82 each coordinate Mg(2+). 3-methyl-2-oxobutanoate-binding positions include 43 to 44 (DS), aspartate 82, and lysine 110. Glutamate 112 provides a ligand contact to Mg(2+). The active-site Proton acceptor is the glutamate 179.

Belongs to the PanB family. As to quaternary structure, homodecamer; pentamer of dimers. Mg(2+) serves as cofactor.

Its subcellular location is the cytoplasm. It carries out the reaction 3-methyl-2-oxobutanoate + (6R)-5,10-methylene-5,6,7,8-tetrahydrofolate + H2O = 2-dehydropantoate + (6S)-5,6,7,8-tetrahydrofolate. It functions in the pathway cofactor biosynthesis; (R)-pantothenate biosynthesis; (R)-pantoate from 3-methyl-2-oxobutanoate: step 1/2. Functionally, catalyzes the reversible reaction in which hydroxymethyl group from 5,10-methylenetetrahydrofolate is transferred onto alpha-ketoisovalerate to form ketopantoate. In Psychrobacter sp. (strain PRwf-1), this protein is 3-methyl-2-oxobutanoate hydroxymethyltransferase.